The primary structure comprises 317 residues: Transaldolase (317 aa).

Catalysis depends on Lys-126, which acts as the Schiff-base intermediate with substrate.

The protein belongs to the transaldolase family. Type 1 subfamily. Homodimer.

Its subcellular location is the cytoplasm. The catalysed reaction is D-sedoheptulose 7-phosphate + D-glyceraldehyde 3-phosphate = D-erythrose 4-phosphate + beta-D-fructose 6-phosphate. Its pathway is carbohydrate degradation; pentose phosphate pathway; D-glyceraldehyde 3-phosphate and beta-D-fructose 6-phosphate from D-ribose 5-phosphate and D-xylulose 5-phosphate (non-oxidative stage): step 2/3. In terms of biological role, transaldolase is important for the balance of metabolites in the pentose-phosphate pathway. This is Transaldolase from Burkholderia pseudomallei (strain 1710b).